Here is a 117-residue protein sequence, read N- to C-terminus: Prefoldin subunit beta (117 aa).

Belongs to the prefoldin subunit beta family. Heterohexamer of two alpha and four beta subunits.

It localises to the cytoplasm. Functionally, molecular chaperone capable of stabilizing a range of proteins. Seems to fulfill an ATP-independent, HSP70-like function in archaeal de novo protein folding. The polypeptide is Prefoldin subunit beta (Methanococcoides burtonii (strain DSM 6242 / NBRC 107633 / OCM 468 / ACE-M)).